The chain runs to 303 residues: NAD kinase (303 aa).

The Proton acceptor role is filled by Asp85. NAD(+) is bound by residues 85 to 86, 159 to 160, Arg187, Asp189, 200 to 205, Ala224, and Gln258; these read DG, ND, and TAYALS.

The protein belongs to the NAD kinase family. The cofactor is a divalent metal cation.

The protein localises to the cytoplasm. The catalysed reaction is NAD(+) + ATP = ADP + NADP(+) + H(+). Involved in the regulation of the intracellular balance of NAD and NADP, and is a key enzyme in the biosynthesis of NADP. Catalyzes specifically the phosphorylation on 2'-hydroxyl of the adenosine moiety of NAD to yield NADP. The protein is NAD kinase of Variovorax paradoxus (strain S110).